Consider the following 359-residue polypeptide: 3-dehydroquinate synthase (359 aa).

Residues 71–76, 105–109, 129–130, K142, K151, and 169–172 each bind NAD(+); these read DGEAHK, GVIGD, TT, and TLHT. Zn(2+)-binding residues include E184, H247, and H264.

It belongs to the sugar phosphate cyclases superfamily. Dehydroquinate synthase family. Co(2+) is required as a cofactor. The cofactor is Zn(2+). It depends on NAD(+) as a cofactor.

The protein localises to the cytoplasm. It catalyses the reaction 7-phospho-2-dehydro-3-deoxy-D-arabino-heptonate = 3-dehydroquinate + phosphate. It participates in metabolic intermediate biosynthesis; chorismate biosynthesis; chorismate from D-erythrose 4-phosphate and phosphoenolpyruvate: step 2/7. In terms of biological role, catalyzes the conversion of 3-deoxy-D-arabino-heptulosonate 7-phosphate (DAHP) to dehydroquinate (DHQ). The protein is 3-dehydroquinate synthase of Neisseria meningitidis serogroup C (strain 053442).